We begin with the raw amino-acid sequence, 263 residues long: Dihydropteroate synthase type-3 (263 aa).

One can recognise a Pterin-binding domain in the interval 2-257 (SKIFGIVNIT…DVKSLSDALK (256 aa)). Asparagine 9 provides a ligand contact to Mg(2+). Serine 49 lines the 4-aminobenzoate pocket. Positions 82, 101, and 172 each coordinate (7,8-dihydropterin-6-yl)methyl diphosphate. 2 residues coordinate 6-hydroxymethyl-7,8-dihydropterin: asparagine 101 and aspartate 172. Phenylalanine 177 contributes to the 4-aminobenzoate binding site. A (7,8-dihydropterin-6-yl)methyl diphosphate-binding site is contributed by lysine 211. Lysine 211 contacts 6-hydroxymethyl-7,8-dihydropterin. Residue serine 212 participates in 4-aminobenzoate binding. 245-247 (RTH) is a binding site for (7,8-dihydropterin-6-yl)methyl diphosphate.

The protein belongs to the DHPS family. Mg(2+) is required as a cofactor.

The enzyme catalyses (7,8-dihydropterin-6-yl)methyl diphosphate + 4-aminobenzoate = 7,8-dihydropteroate + diphosphate. Its pathway is cofactor biosynthesis; tetrahydrofolate biosynthesis; 7,8-dihydrofolate from 2-amino-4-hydroxy-6-hydroxymethyl-7,8-dihydropteridine diphosphate and 4-aminobenzoate: step 1/2. Functionally, catalyzes the condensation of para-aminobenzoate (pABA) with 6-hydroxymethyl-7,8-dihydropterin diphosphate (DHPt-PP) to form 7,8-dihydropteroate (H2Pte), the immediate precursor of folate derivatives. Confers resistance to sulfonamide antibiotics, including sulfamethoxazole (SMX), sulfadiazine and sulfisoxazole. The sequence is that of Dihydropteroate synthase type-3 from Escherichia coli.